The sequence spans 339 residues: Heat-inducible transcription repressor HrcA (339 aa).

The protein belongs to the HrcA family.

Functionally, negative regulator of class I heat shock genes (grpE-dnaK-dnaJ and groELS operons). Prevents heat-shock induction of these operons. The protein is Heat-inducible transcription repressor HrcA of Clostridioides difficile (strain 630) (Peptoclostridium difficile).